Reading from the N-terminus, the 115-residue chain is MRVKGGPTTRRRRKKWLNQAEGTFGTRHASYKVAKQTVIKSAKYAFRDRKNKKREFRALWIQRLNGALRELGVTYSVFINLLKKQQITINRKMLSEIAIHDHEAFKKLVKEVTGK.

The protein belongs to the bacterial ribosomal protein bL20 family.

In terms of biological role, binds directly to 23S ribosomal RNA and is necessary for the in vitro assembly process of the 50S ribosomal subunit. It is not involved in the protein synthesizing functions of that subunit. This Mycoplasmoides gallisepticum (strain R(low / passage 15 / clone 2)) (Mycoplasma gallisepticum) protein is Large ribosomal subunit protein bL20.